The chain runs to 280 residues: 4-deoxy-L-threo-5-hexosulose-uronate ketol-isomerase 1 (280 aa).

4 residues coordinate Zn(2+): H198, H200, E205, and H247.

Belongs to the KduI family. Requires Zn(2+) as cofactor.

It catalyses the reaction 5-dehydro-4-deoxy-D-glucuronate = 3-deoxy-D-glycero-2,5-hexodiulosonate. It participates in glycan metabolism; pectin degradation; 2-dehydro-3-deoxy-D-gluconate from pectin: step 4/5. Functionally, catalyzes the isomerization of 5-dehydro-4-deoxy-D-glucuronate to 3-deoxy-D-glycero-2,5-hexodiulosonate. The protein is 4-deoxy-L-threo-5-hexosulose-uronate ketol-isomerase 1 (kduI1) of Rhizobium meliloti (strain 1021) (Ensifer meliloti).